The sequence spans 1034 residues: DNA polymerase I B, chloroplastic/mitochondrial (1034 aa).

A chloroplast and mitochondrion-targeting transit peptide spans 1-55 (MGVSLRHLSPSSFWVSRRPRVSSSILSFLVPRRRILCTRKVAIIKGNAGYSTATD). Positions 270-468 (ACDTEVSRID…LYESMKKQLQ (199 aa)) constitute a 3'-5' exonuclease domain. Residues 700–1030 (HAIAALCEVC…SVDAKCAQNW (331 aa)) are polymerase.

The protein belongs to the DNA polymerase type-A family. In terms of tissue distribution, expressed in shoot apical meristem.

Its subcellular location is the mitochondrion. It is found in the plastid. It localises to the chloroplast. The catalysed reaction is DNA(n) + a 2'-deoxyribonucleoside 5'-triphosphate = DNA(n+1) + diphosphate. With respect to regulation, not inhibited by aphidicolin. Functionally, in addition to polymerase activity, this DNA polymerase exhibits 5'-3' exonuclease activity. Required for DNA replication and accumulation in plastids and mitochondria. The chain is DNA polymerase I B, chloroplastic/mitochondrial (POLIB) from Arabidopsis thaliana (Mouse-ear cress).